The following is a 293-amino-acid chain: Diaminopimelate epimerase (293 aa).

Residues Asn-17, Gln-47, and Asn-67 each contribute to the substrate site. Cys-76 (proton donor) is an active-site residue. Substrate is bound by residues 77–78 (GN), Asn-164, Asn-197, and 215–216 (ER). Residue Cys-224 is the Proton acceptor of the active site. Substrate is bound at residue 225 to 226 (GS).

It belongs to the diaminopimelate epimerase family. In terms of assembly, homodimer.

Its subcellular location is the cytoplasm. The catalysed reaction is (2S,6S)-2,6-diaminopimelate = meso-2,6-diaminopimelate. It participates in amino-acid biosynthesis; L-lysine biosynthesis via DAP pathway; DL-2,6-diaminopimelate from LL-2,6-diaminopimelate: step 1/1. Catalyzes the stereoinversion of LL-2,6-diaminopimelate (L,L-DAP) to meso-diaminopimelate (meso-DAP), a precursor of L-lysine and an essential component of the bacterial peptidoglycan. The protein is Diaminopimelate epimerase of Rhodopseudomonas palustris (strain ATCC BAA-98 / CGA009).